We begin with the raw amino-acid sequence, 250 residues long: NAD(P)H-quinone oxidoreductase subunit K (250 aa).

Residues Cys-60, Cys-61, Cys-125, and Cys-156 each contribute to the [4Fe-4S] cluster site. The interval 230–250 (ELNTPEIDVSPASQSSSTYES) is disordered. The segment covering 240-250 (PASQSSSTYES) has biased composition (polar residues).

The protein belongs to the complex I 20 kDa subunit family. As to quaternary structure, NDH-1 can be composed of about 15 different subunits; different subcomplexes with different compositions have been identified which probably have different functions. Requires [4Fe-4S] cluster as cofactor.

Its subcellular location is the cellular thylakoid membrane. It carries out the reaction a plastoquinone + NADH + (n+1) H(+)(in) = a plastoquinol + NAD(+) + n H(+)(out). It catalyses the reaction a plastoquinone + NADPH + (n+1) H(+)(in) = a plastoquinol + NADP(+) + n H(+)(out). In terms of biological role, NDH-1 shuttles electrons from an unknown electron donor, via FMN and iron-sulfur (Fe-S) centers, to quinones in the respiratory and/or the photosynthetic chain. The immediate electron acceptor for the enzyme in this species is believed to be plastoquinone. Couples the redox reaction to proton translocation, and thus conserves the redox energy in a proton gradient. Cyanobacterial NDH-1 also plays a role in inorganic carbon-concentration. This is NAD(P)H-quinone oxidoreductase subunit K from Prochlorococcus marinus (strain MIT 9313).